The sequence spans 368 residues: Ankyrin repeat domain-containing protein 40 (368 aa).

The residue at position 1 (methionine 1) is an N-acetylmethionine. ANK repeat units follow at residues 9–38 (EQQE…DVNS) and 43–72 (NGWT…DKEI). Disordered regions lie at residues 93–115 (MGVE…KKES), 139–176 (DSAQ…GTFP), and 196–238 (ILRT…NGTY). Positions 95–107 (VEEEDDDDDDDDN) are enriched in acidic residues. A compositionally biased stretch (pro residues) spans 149–169 (STPPASPPADGSPPLLPPGEP). The span at 212–224 (PVSQSRSLFSSVP) shows a compositional bias: polar residues.

The chain is Ankyrin repeat domain-containing protein 40 (ANKRD40) from Homo sapiens (Human).